We begin with the raw amino-acid sequence, 128 residues long: Protein 2B* (128 aa).

Disordered stretches follow at residues 1 to 27 and 92 to 128; these read PFMF…NPTA and RDDN…RNSS. The segment covering 18 to 27 has biased composition (polar residues); sequence SVINGSNPTA. The segment covering 111–128 has biased composition (basic and acidic residues); sequence IDGRRDYKPDKSVRRNSS.

It belongs to the encephalomyocarditis virus protein 2B* family.

The sequence is that of Protein 2B* from Aotus trivirgatus (Three-striped night monkey).